A 151-amino-acid polypeptide reads, in one-letter code: Small ribosomal subunit protein uS9 (151 aa).

This sequence belongs to the universal ribosomal protein uS9 family.

The chain is Small ribosomal subunit protein uS9 (RpS16) from Spodoptera frugiperda (Fall armyworm).